The chain runs to 338 residues: Lipoate-protein ligase A (338 aa).

In terms of domain architecture, BPL/LPL catalytic spans 29–216; that stretch reads PATQRVLFLW…AFFAHYGERV (188 aa). Residues R71, 76–79, and K134 contribute to the ATP site; that span reads GAVF. K134 is a binding site for (R)-lipoate.

It belongs to the LplA family. In terms of assembly, monomer.

It localises to the cytoplasm. The catalysed reaction is L-lysyl-[lipoyl-carrier protein] + (R)-lipoate + ATP = N(6)-[(R)-lipoyl]-L-lysyl-[lipoyl-carrier protein] + AMP + diphosphate + H(+). Its pathway is protein modification; protein lipoylation via exogenous pathway; protein N(6)-(lipoyl)lysine from lipoate: step 1/2. It participates in protein modification; protein lipoylation via exogenous pathway; protein N(6)-(lipoyl)lysine from lipoate: step 2/2. Functionally, catalyzes both the ATP-dependent activation of exogenously supplied lipoate to lipoyl-AMP and the transfer of the activated lipoyl onto the lipoyl domains of lipoate-dependent enzymes. This Salmonella paratyphi B (strain ATCC BAA-1250 / SPB7) protein is Lipoate-protein ligase A.